Here is a 614-residue protein sequence, read N- to C-terminus: ATP-dependent rRNA helicase SPB4 (614 aa).

A Q motif motif is present at residues 10 to 38 (WSVLKCDLHPWIKEAIKSLGYPTMTPVQA). Residues 41–233 (IPLFSGNKDV…RTGMANPVKI (193 aa)) form the Helicase ATP-binding domain. 54–61 (AVTGSGKT) provides a ligand contact to ATP. A DEAD box motif is present at residues 181–184 (DEAD). The region spanning 260–431 (KISALIALIK…KFQKKFRKYM (172 aa)) is the Helicase C-terminal domain. A coiled-coil region spans residues 510–581 (EYADKQKEES…IEKQLMDDSS (72 aa)). Basic and acidic residues predominate over residues 514 to 529 (KQKEESRKKNLEEDKA). Positions 514 to 614 (KQKEESRKKN…DSMQGSFDDL (101 aa)) are disordered. A compositionally biased stretch (basic residues) spans 530-541 (RKVHDAKKRKEL). Composition is skewed to basic and acidic residues over residues 551–563 (KTDKIETKQERRE) and 584–595 (EETKVDWKEMVK). The span at 604–614 (SDSMQGSFDDL) shows a compositional bias: polar residues.

The protein belongs to the DEAD box helicase family. DDX55/SPB4 subfamily. In terms of assembly, component of pre-60S ribosomal complexes.

The protein localises to the nucleus. Its subcellular location is the nucleolus. It carries out the reaction ATP + H2O = ADP + phosphate + H(+). Functionally, ATP-binding RNA helicase involved in the biogenesis of 60S ribosomal subunits. Binds 90S pre-ribosomal particles and dissociates from pre-60S ribosomal particles after processing of 27SB pre-rRNA. Required for the normal formation of 18S rRNA through the processing of pre-rRNAs at sites A0, A1 and A2, and the normal formation of 25S and 5.8S rRNAs through the processing of pre-rRNAs at sites C1 and C2. In Debaryomyces hansenii (strain ATCC 36239 / CBS 767 / BCRC 21394 / JCM 1990 / NBRC 0083 / IGC 2968) (Yeast), this protein is ATP-dependent rRNA helicase SPB4.